The chain runs to 459 residues: Ribulose bisphosphate carboxylase large chain (459 aa).

Position 4 is an N6,N6,N6-trimethyllysine (Lys-4). 2 residues coordinate substrate: Asn-113 and Thr-163. Catalysis depends on Lys-165, which acts as the Proton acceptor. Lys-167 is a substrate binding site. Mg(2+) is bound by residues Lys-191, Asp-193, and Glu-194. Lys-191 is subject to N6-carboxylysine. The Proton acceptor role is filled by His-284. Positions 285, 317, and 369 each coordinate substrate.

Belongs to the RuBisCO large chain family. Type I subfamily. As to quaternary structure, heterohexadecamer of 8 large chains and 8 small chains; disulfide-linked. The disulfide link is formed within the large subunit homodimers. Mg(2+) is required as a cofactor. Post-translationally, the disulfide bond which can form in the large chain dimeric partners within the hexadecamer appears to be associated with oxidative stress and protein turnover.

The protein resides in the plastid. It localises to the chloroplast. It catalyses the reaction 2 (2R)-3-phosphoglycerate + 2 H(+) = D-ribulose 1,5-bisphosphate + CO2 + H2O. The catalysed reaction is D-ribulose 1,5-bisphosphate + O2 = 2-phosphoglycolate + (2R)-3-phosphoglycerate + 2 H(+). In terms of biological role, ruBisCO catalyzes two reactions: the carboxylation of D-ribulose 1,5-bisphosphate, the primary event in carbon dioxide fixation, as well as the oxidative fragmentation of the pentose substrate in the photorespiration process. Both reactions occur simultaneously and in competition at the same active site. This chain is Ribulose bisphosphate carboxylase large chain, found in Micranthes integrifolia (Wholeleaf saxifrage).